We begin with the raw amino-acid sequence, 518 residues long: Lysine--tRNA ligase (518 aa).

A disordered region spans residues 1 to 28; it reads MTEPTQPNAAQPDAARPNVAPEMDDNKI. Mg(2+) is bound by residues Glu-428 and Glu-435.

It belongs to the class-II aminoacyl-tRNA synthetase family. As to quaternary structure, homodimer. Mg(2+) serves as cofactor.

The protein localises to the cytoplasm. The catalysed reaction is tRNA(Lys) + L-lysine + ATP = L-lysyl-tRNA(Lys) + AMP + diphosphate. The sequence is that of Lysine--tRNA ligase from Paraburkholderia phytofirmans (strain DSM 17436 / LMG 22146 / PsJN) (Burkholderia phytofirmans).